The chain runs to 107 residues: MLILLRLSEVCVNFVIIIGIPLLIEASILCIQNILELLLKGIGILKFNRYLHTIILRLFFLSFYMLHFPITLSILAFQLPLNLLTLSQASFHLPRSHMILYQQQECY.

The next 2 helical transmembrane spans lie at 11–31 (CVNF…ILCI) and 58–78 (LFFL…LAFQ).

The protein localises to the mitochondrion membrane. This is an uncharacterized protein from Saccharomyces cerevisiae (strain ATCC 204508 / S288c) (Baker's yeast).